Here is a 364-residue protein sequence, read N- to C-terminus: Fructose-1,6-bisphosphatase class 1 2 (364 aa).

Mg(2+) contacts are provided by Glu-99, Asp-121, Leu-123, and Asp-124. Residues Asp-124–Ser-127 and Asn-220 each bind substrate. Position 292 (Glu-292) interacts with Mg(2+).

This sequence belongs to the FBPase class 1 family. In terms of assembly, homotetramer. Mg(2+) is required as a cofactor.

Its subcellular location is the cytoplasm. It carries out the reaction beta-D-fructose 1,6-bisphosphate + H2O = beta-D-fructose 6-phosphate + phosphate. It participates in carbohydrate biosynthesis; gluconeogenesis. The sequence is that of Fructose-1,6-bisphosphatase class 1 2 from Polaromonas naphthalenivorans (strain CJ2).